Consider the following 352-residue polypeptide: Rhodopsin (352 aa).

The Extracellular portion of the chain corresponds to 1–36; it reads MNGTEGPFFYIPMVNTTGVVRSPYEYPQYYLVNPAA. 2 N-linked (GlcNAc...) asparagine glycosylation sites follow: Asn2 and Asn15. A helical transmembrane segment spans residues 37-61; it reads YACLGAYMFFLILVGFPVNFLTLYV. Residues 62-73 are Cytoplasmic-facing; sequence TLEHKKLRTPLN. Residues 74–96 traverse the membrane as a helical segment; that stretch reads YILLNLAVADLFMVFGGFTTTIY. Over 97 to 110 the chain is Extracellular; sequence TSMHGYFVLGRLGC. The cysteines at positions 110 and 187 are disulfide-linked. A helical membrane pass occupies residues 111–133; that stretch reads NIEGFFATLGGEIALWSLVVLAI. Residues 134–136 carry the 'Ionic lock' involved in activated form stabilization motif; that stretch reads ERW. Residues 134–152 are Cytoplasmic-facing; the sequence is ERWVVVCKPISNFRFGENH. Residues 153–173 form a helical membrane-spanning segment; sequence AIMGVAFTWFMASACAVPPLV. Residues 174–202 are Extracellular-facing; sequence GWSRYIPEGMQCSCGIDYYTRAEGFNNES. N-linked (GlcNAc...) asparagine glycosylation is present at Asn200. A helical transmembrane segment spans residues 203-224; the sequence is FVIYMFTVHFCIPLAVVGFCYG. Residues 225 to 252 lie on the Cytoplasmic side of the membrane; the sequence is RLLCAVKEAAAAQQESETTQRAEREVSR. The helical transmembrane segment at 253-274 threads the bilayer; it reads MVVIMVIGFLVCWLPYASVAWY. At 275–286 the chain is on the extracellular side; the sequence is IFTHQGSEFGPL. Residues 287–308 traverse the membrane as a helical segment; the sequence is FMTIPAFFAKSSSIYNPMIYIC. Lys296 bears the N6-(retinylidene)lysine mark. At 309 to 352 the chain is on the cytoplasmic side; sequence MNKQFRHCMITTLCCGKNPFEEEEGASTTKTEASSVSSSSVSPA. 2 S-palmitoyl cysteine lipidation sites follow: Cys322 and Cys323. The segment at 331 to 352 is disordered; that stretch reads EEGASTTKTEASSVSSSSVSPA. The segment covering 342–352 has biased composition (low complexity); it reads SSVSSSSVSPA.

It belongs to the G-protein coupled receptor 1 family. Opsin subfamily. In terms of processing, phosphorylated on some or all of the serine and threonine residues present in the C-terminal region. Contains one covalently linked retinal chromophore.

The protein localises to the membrane. Its subcellular location is the cell projection. It localises to the cilium. The protein resides in the photoreceptor outer segment. In terms of biological role, photoreceptor required for image-forming vision at low light intensity. While most salt water fish species use retinal as chromophore, most freshwater fish use 3-dehydroretinal, or a mixture of retinal and 3-dehydroretinal. Light-induced isomerization of 11-cis to all-trans retinal triggers a conformational change that activates signaling via G-proteins. Subsequent receptor phosphorylation mediates displacement of the bound G-protein alpha subunit by arrestin and terminates signaling. This is Rhodopsin (rho) from Gobius niger (Black goby).